We begin with the raw amino-acid sequence, 204 residues long: High frequency lysogenization protein HflD homolog (204 aa).

This sequence belongs to the HflD family.

It localises to the cytoplasm. Its subcellular location is the cell inner membrane. The protein is High frequency lysogenization protein HflD homolog of Aeromonas hydrophila subsp. hydrophila (strain ATCC 7966 / DSM 30187 / BCRC 13018 / CCUG 14551 / JCM 1027 / KCTC 2358 / NCIMB 9240 / NCTC 8049).